The chain runs to 316 residues: MEKIEHTTISTNGINMHVASIGSGPAVLFLHGFPELWYSWRHQLLFLSSMGYRAIAPDLRGFGDTDAPPSPSSYTAHHIVGDLVGLLDQLGIDQVFLVGHDWGAMMAWYFCLFRPDRVKALVNLSVHFLRRHPSIKFVDGFRALLGDDFYFCQFQEPGVAEADFGSVDVATMLKKFLTMRDPRPPMIPKEKGFRALETPDPLPAWLTEEDIDYFAGKFRKTGFTGGFNYYRAFNLTWELTAPWSGSEIKVAAKFIVGDLDLVYHFPGAKEYIHGGGFKKDVPLLEEVVVVDGAAHFINQERPAEISSLIYDFIKKF.

Residues 25-302 (PAVLFLHGFP…AAHFINQERP (278 aa)) form the AB hydrolase-1 domain. Asp101 functions as the Nucleophile in the catalytic mechanism. Tyr150 is an an epoxide binding site. Catalysis depends on Tyr230, which acts as the Proton donor. His295 functions as the Proton acceptor in the catalytic mechanism.

This sequence belongs to the AB hydrolase superfamily. Epoxide hydrolase family. In terms of assembly, homodimer. Highly expressed in young fruits 15 days after anthesis (15-DAA). Also observed in stems and leaves.

It catalyses the reaction an epoxide + H2O = an ethanediol. The enzyme catalyses (24S)-24,25-epoxycucurbitadienol + H2O = (24R)-24,25-dihydroxycucurbitadienol. The protein operates within secondary metabolite biosynthesis; terpenoid biosynthesis. Its function is as follows. Epoxide hydrolase involved in the biosynthesis of cucurbitacin and mogroside tetracyclic triterpene natural products (e.g. siamenoside I and mogrosides IV, V and VI). Cucurbitacins have cytotoxic properties and exhibit deterrent taste as a defense barrier against herbivores. Mogrosides are nonsugar highly oxygenated compounds used as high-intensity zero-calorie sweeteners; they also possess pharmacological properties such as regulating immunity, lowering blood sugar and lipid levels, protecting the liver, and acting as antioxidants and antitumor agents. Catalyzes the hydrolysis of aromatic epoxide-containing substrates, such as the conversion of 24,25-epoxycucurbitadienol to 24,25-dihydroxycucurbitadienol. The polypeptide is Epoxide hydrolase 2 (Siraitia grosvenorii (Monk's fruit)).